Reading from the N-terminus, the 79-residue chain is MAQQRRGGNRRRRKVDFIAANHIEYIDYKDTDLLKRFISERGKILPRRVSGTSAKNQRRLTIAIKRARIMGLLPFVTED.

This sequence belongs to the bacterial ribosomal protein bS18 family. As to quaternary structure, part of the 30S ribosomal subunit. Forms a tight heterodimer with protein bS6.

Its function is as follows. Binds as a heterodimer with protein bS6 to the central domain of the 16S rRNA, where it helps stabilize the platform of the 30S subunit. The protein is Small ribosomal subunit protein bS18 of Latilactobacillus sakei subsp. sakei (strain 23K) (Lactobacillus sakei subsp. sakei).